The following is a 559-amino-acid chain: Acetylcholinesterase-1 (559 aa).

The signal sequence occupies residues 1-21; that stretch reads MMLPRCFVTVLLMSSVLYIGG. Residues Cys-92 and Cys-114 are joined by a disulfide bond. Position 142-143 (142-143) interacts with substrate; sequence GG. Ser-223 (acyl-ester intermediate) is an active-site residue. The residue at position 223 (Ser-223) is a Phosphoserine. A disulfide bond links Cys-276 and Cys-293. Residues Asn-278 and Asn-342 are each glycosylated (N-linked (GlcNAc...) asparagine). Residue Glu-354 is the Charge relay system of the active site. Residue Asn-374 is glycosylated (N-linked (GlcNAc...) asparagine). Cys-432 and Cys-550 are joined by a disulfide. The active-site Charge relay system is His-471.

Belongs to the type-B carboxylesterase/lipase family. In terms of tissue distribution, expressed by the venom gland.

It localises to the secreted. It catalyses the reaction acetylcholine + H2O = choline + acetate + H(+). Functionally, terminates signal transduction at the neuromuscular junction by rapid hydrolysis of the acetylcholine released into the synaptic cleft. The chain is Acetylcholinesterase-1 from Trittame loki (Brush-footed trapdoor spider).